Consider the following 254-residue polypeptide: Triosephosphate isomerase 2 (254 aa).

9–11 contributes to the substrate binding site; sequence NMK. The Electrophile role is filled by histidine 96. Glutamate 168 functions as the Proton acceptor in the catalytic mechanism. Glycine 174 and serine 212 together coordinate substrate.

The protein belongs to the triosephosphate isomerase family. In terms of assembly, homodimer.

The protein localises to the cytoplasm. The enzyme catalyses D-glyceraldehyde 3-phosphate = dihydroxyacetone phosphate. The protein operates within polyol metabolism; glycerol degradation. Involved in the glycerol metabolism. Catalyzes stereospecifically the conversion of dihydroxyacetone phosphate (DHAP) to D-glyceraldehyde-3-phosphate (G3P). This is Triosephosphate isomerase 2 from Listeria innocua serovar 6a (strain ATCC BAA-680 / CLIP 11262).